Consider the following 293-residue polypeptide: Elongation factor Ts (293 aa).

The tract at residues 80 to 83 (TDFV) is involved in Mg(2+) ion dislocation from EF-Tu.

Belongs to the EF-Ts family.

It is found in the cytoplasm. Associates with the EF-Tu.GDP complex and induces the exchange of GDP to GTP. It remains bound to the aminoacyl-tRNA.EF-Tu.GTP complex up to the GTP hydrolysis stage on the ribosome. This chain is Elongation factor Ts, found in Paraburkholderia xenovorans (strain LB400).